The primary structure comprises 305 residues: N-acetylmuramic acid 6-phosphate etherase (305 aa).

One can recognise an SIS domain in the interval 54 to 217; sequence AVPQLERGGR…SSALMVRLGK (164 aa). Glu-82 acts as the Proton donor in catalysis. Glu-113 is a catalytic residue.

Belongs to the GCKR-like family. MurNAc-6-P etherase subfamily. In terms of assembly, homodimer.

It carries out the reaction N-acetyl-D-muramate 6-phosphate + H2O = N-acetyl-D-glucosamine 6-phosphate + (R)-lactate. Its pathway is amino-sugar metabolism; N-acetylmuramate degradation. Functionally, specifically catalyzes the cleavage of the D-lactyl ether substituent of MurNAc 6-phosphate, producing GlcNAc 6-phosphate and D-lactate. The protein is N-acetylmuramic acid 6-phosphate etherase of Deinococcus radiodurans (strain ATCC 13939 / DSM 20539 / JCM 16871 / CCUG 27074 / LMG 4051 / NBRC 15346 / NCIMB 9279 / VKM B-1422 / R1).